The following is a 150-amino-acid chain: Ribonuclease H (150 aa).

Residues 1–141 form the RNase H type-1 domain; it reads MKSIEVHTDG…VDVLARNQAI (141 aa). Mg(2+) is bound by residues Asp-9, Glu-47, Asp-69, and Asp-133.

Belongs to the RNase H family. In terms of assembly, monomer. Mg(2+) is required as a cofactor.

It localises to the cytoplasm. The enzyme catalyses Endonucleolytic cleavage to 5'-phosphomonoester.. Its function is as follows. Endonuclease that specifically degrades the RNA of RNA-DNA hybrids. In Xanthomonas campestris pv. campestris (strain 8004), this protein is Ribonuclease H.